The primary structure comprises 379 residues: Cathepsin B-like cysteine proteinase 6 (379 aa).

An N-terminal signal peptide occupies residues 1 to 16; it reads MKTLLFLSCIVVAAYC. Positions 17–104 are excised as a propeptide; sequence ACNDNLESVL…LSKTKDLDLD (88 aa). Cystine bridges form between Cys118–Cys147, Cys130–Cys174, Cys166–Cys233, Cys167–Cys170, Cys203–Cys237, and Cys211–Cys223. Cys133 is an active-site residue. N-linked (GlcNAc...) asparagine glycosylation is present at Asn196. Asn201 carries N-linked (GlcNAc...) asparagine; atypical glycosylation. Active-site residues include His305 and Asn325.

It belongs to the peptidase C1 family.

The polypeptide is Cathepsin B-like cysteine proteinase 6 (cpr-6) (Caenorhabditis elegans).